The chain runs to 327 residues: METIYGSSLKEADAVYACQFDGQGGMTPIDMNGVATPVQPFWQHLDYRNPKSYRWLMDTDLLPETVKAGLAGESLRPKIMRTGDGTMITFRTINNSESERPDQLVVFRIYINSQIVISSRHRKVHSLEQVLSDLQNGIGAKTTGHWLVEMVDAITDEVGNFIEDLHDNLIELENMILEQRIPGRGGLALLRKQLIILRRYMAPQRDVFARLASEKLLWMSDEDRYRMQEISDRLGRELDDLDGCIARTAIISDEITSMMADAMNRRTYTMSLLAMIFLPTTFLTGLFGVNLGGIPGNEYYLGFAIFCLLLFGLVLFVAWWLKKSKWL.

Residues 1–271 (METIYGSSLK…AMNRRTYTMS (271 aa)) are Cytoplasmic-facing. The chain crosses the membrane as a helical span at residues 272–292 (LLAMIFLPTTFLTGLFGVNLG). The Periplasmic portion of the chain corresponds to 293-300 (GIPGNEYY). The helical transmembrane segment at 301 to 321 (LGFAIFCLLLFGLVLFVAWWL) threads the bilayer. Residues 322-327 (KKSKWL) lie on the Cytoplasmic side of the membrane.

Belongs to the CorA metal ion transporter (MIT) (TC 1.A.35) family.

It localises to the cell inner membrane. It catalyses the reaction Zn(2+)(out) + H(+)(out) = Zn(2+)(in) + H(+)(in). Functionally, zinc transporter. Acts as a Zn(2+):proton symporter, which likely mediates zinc ion uptake. This chain is Zinc transport protein ZntB, found in Photorhabdus laumondii subsp. laumondii (strain DSM 15139 / CIP 105565 / TT01) (Photorhabdus luminescens subsp. laumondii).